The sequence spans 251 residues: Cyclohexanol dehydrogenase (251 aa).

The NAD(+) site is built by Asp42, Asn95, Tyr161, Lys165, Ile194, and Thr196. The active-site Proton acceptor is the Tyr161.

Belongs to the short-chain dehydrogenases/reductases (SDR) family.

The enzyme catalyses cyclohexanol + NAD(+) = cyclohexanone + NADH + H(+). Functionally, catalyzes the oxidation of cyclohexanol to cyclohexanone. Required for the conversion of cyclohexanol to adipic acid. This is Cyclohexanol dehydrogenase from Acinetobacter sp. (strain SE19).